The following is a 229-amino-acid chain: MHIERLDFENSPYLGVYGRATDRVLLLREGLGEKKLEVLREVLKVPIIETSIMKSRIVGIFAAGNSNAIIVPWYIWDAELERIKTALNEFGIDMDVVPFKSRLTALGNLILTNDKAALVSKEFTREEANAIGEILGVDEVERGMIASYRSVGSVGVVTNKGGLVHPEATDEELEWLSDLFGVDIYVGTANMGVPFVGSCMLANSYGVVVGHLTTGPEIVKIEEALGFLG.

It belongs to the eIF-6 family.

Its function is as follows. Binds to the 50S ribosomal subunit and prevents its association with the 30S ribosomal subunit to form the 70S initiation complex. In Thermococcus kodakarensis (strain ATCC BAA-918 / JCM 12380 / KOD1) (Pyrococcus kodakaraensis (strain KOD1)), this protein is Translation initiation factor 6.